Here is a 165-residue protein sequence, read N- to C-terminus: Lipoprotein signal peptidase (165 aa).

4 helical membrane-spanning segments follow: residues 7–27 (FFLLLGLIITVLLDQAIKYWI), 28–48 (THTMLLGTEIPLFPFISLYHV), 61–81 (FSHWGLIALTITIIVFLFWLW), and 87–107 (DKALSRFGIVLIIGGAIGNLI). Residues D117 and D136 contribute to the active site. The helical transmembrane segment at 128-148 (SFAIFNLADTFITLGAISILI) threads the bilayer.

It belongs to the peptidase A8 family.

The protein localises to the cell inner membrane. The enzyme catalyses Release of signal peptides from bacterial membrane prolipoproteins. Hydrolyzes -Xaa-Yaa-Zaa-|-(S,diacylglyceryl)Cys-, in which Xaa is hydrophobic (preferably Leu), and Yaa (Ala or Ser) and Zaa (Gly or Ala) have small, neutral side chains.. It participates in protein modification; lipoprotein biosynthesis (signal peptide cleavage). Functionally, this protein specifically catalyzes the removal of signal peptides from prolipoproteins. In Bartonella bacilliformis (strain ATCC 35685 / KC583 / Herrer 020/F12,63), this protein is Lipoprotein signal peptidase.